We begin with the raw amino-acid sequence, 205 residues long: Small ribosomal subunit protein uS4 (205 aa).

The tract at residues Asn-18–Ser-46 is disordered. One can recognise an S4 RNA-binding domain in the interval Ser-94–Glu-155.

Belongs to the universal ribosomal protein uS4 family. Part of the 30S ribosomal subunit. Contacts protein S5. The interaction surface between S4 and S5 is involved in control of translational fidelity.

Functionally, one of the primary rRNA binding proteins, it binds directly to 16S rRNA where it nucleates assembly of the body of the 30S subunit. In terms of biological role, with S5 and S12 plays an important role in translational accuracy. This chain is Small ribosomal subunit protein uS4, found in Phenylobacterium zucineum (strain HLK1).